A 140-amino-acid chain; its full sequence is uncharacterized protein (140 aa).

Belongs to the MG067/MG068/MG395 family.

This is an uncharacterized protein from Mycoplasma pneumoniae (strain ATCC 29342 / M129 / Subtype 1) (Mycoplasmoides pneumoniae).